The primary structure comprises 105 residues: Replication restart protein PriB (105 aa).

Positions 1–102 constitute an SSB domain; sequence MTTNRLVLSG…LHAEQIEFID (102 aa).

It belongs to the PriB family. As to quaternary structure, homodimer. Interacts with PriA and DnaT. Component of the replication restart primosome. Primosome assembly occurs via a 'hand-off' mechanism. PriA binds to replication forks, subsequently PriB then DnaT bind; DnaT then displaces ssDNA to generate the helicase loading substrate.

Functionally, involved in the restart of stalled replication forks, which reloads the replicative helicase on sites other than the origin of replication; the PriA-PriB pathway is the major replication restart pathway. During primosome assembly it facilitates complex formation between PriA and DnaT on DNA; stabilizes PriA on DNA. Stimulates the DNA unwinding activity of PriA helicase. This is Replication restart protein PriB from Yersinia pseudotuberculosis serotype O:1b (strain IP 31758).